We begin with the raw amino-acid sequence, 216 residues long: 3-isopropylmalate dehydratase small subunit (216 aa).

This sequence belongs to the LeuD family. LeuD type 1 subfamily. As to quaternary structure, heterodimer of LeuC and LeuD.

It catalyses the reaction (2R,3S)-3-isopropylmalate = (2S)-2-isopropylmalate. The protein operates within amino-acid biosynthesis; L-leucine biosynthesis; L-leucine from 3-methyl-2-oxobutanoate: step 2/4. Functionally, catalyzes the isomerization between 2-isopropylmalate and 3-isopropylmalate, via the formation of 2-isopropylmaleate. This Methylibium petroleiphilum (strain ATCC BAA-1232 / LMG 22953 / PM1) protein is 3-isopropylmalate dehydratase small subunit.